A 141-amino-acid polypeptide reads, in one-letter code: MSSRTIMAFDFGTKSIGSAIGQEITGTASPLKAFKAQDGTPNWDDIEKQIKEWNPDLIVVGLPTDLHGKELDTITPRAKKFANRLHGRFGKQVELHDERLSTAEARADLFEFGGYKALSKGNIDCQSAVVILESWFENQWS.

The protein belongs to the YqgF nuclease family.

The protein localises to the cytoplasm. Its function is as follows. Could be a nuclease involved in processing of the 5'-end of pre-16S rRNA. This chain is Putative pre-16S rRNA nuclease, found in Aliivibrio fischeri (strain MJ11) (Vibrio fischeri).